A 387-amino-acid chain; its full sequence is Succinate--CoA ligase [ADP-forming] subunit beta (387 aa).

The 228-residue stretch at K9–K236 folds into the ATP-grasp domain. Residues K45, G52–G54, S94, and E99 contribute to the ATP site. Residues N191 and D205 each contribute to the Mg(2+) site. Substrate contacts are provided by residues N256 and G318–T320.

The protein belongs to the succinate/malate CoA ligase beta subunit family. Heterotetramer of two alpha and two beta subunits. It depends on Mg(2+) as a cofactor.

It carries out the reaction succinate + ATP + CoA = succinyl-CoA + ADP + phosphate. The enzyme catalyses GTP + succinate + CoA = succinyl-CoA + GDP + phosphate. It participates in carbohydrate metabolism; tricarboxylic acid cycle; succinate from succinyl-CoA (ligase route): step 1/1. Succinyl-CoA synthetase functions in the citric acid cycle (TCA), coupling the hydrolysis of succinyl-CoA to the synthesis of either ATP or GTP and thus represents the only step of substrate-level phosphorylation in the TCA. The beta subunit provides nucleotide specificity of the enzyme and binds the substrate succinate, while the binding sites for coenzyme A and phosphate are found in the alpha subunit. In Mycolicibacterium vanbaalenii (strain DSM 7251 / JCM 13017 / BCRC 16820 / KCTC 9966 / NRRL B-24157 / PYR-1) (Mycobacterium vanbaalenii), this protein is Succinate--CoA ligase [ADP-forming] subunit beta.